Consider the following 678-residue polypeptide: DNA ligase (678 aa).

NAD(+) contacts are provided by residues 47–51, 96–97, and E122; these read DSDYD and SL. K124 acts as the N6-AMP-lysine intermediate in catalysis. NAD(+)-binding residues include R145, E182, K300, and K324. Zn(2+) is bound by residues C418, C421, C436, and C442. Residues 602–678 enclose the BRCT domain; it reads AYNESFTGKT…ILEDNLKDLL (77 aa).

This sequence belongs to the NAD-dependent DNA ligase family. LigA subfamily. Mg(2+) serves as cofactor. The cofactor is Mn(2+).

It catalyses the reaction NAD(+) + (deoxyribonucleotide)n-3'-hydroxyl + 5'-phospho-(deoxyribonucleotide)m = (deoxyribonucleotide)n+m + AMP + beta-nicotinamide D-nucleotide.. Its function is as follows. DNA ligase that catalyzes the formation of phosphodiester linkages between 5'-phosphoryl and 3'-hydroxyl groups in double-stranded DNA using NAD as a coenzyme and as the energy source for the reaction. It is essential for DNA replication and repair of damaged DNA. In Francisella tularensis subsp. holarctica (strain FTNF002-00 / FTA), this protein is DNA ligase.